Consider the following 513-residue polypeptide: Histidine ammonia-lyase (513 aa).

A cross-link (5-imidazolinone (Ala-Gly)) is located at residues 142–144 (ASG). At Ser143 the chain carries 2,3-didehydroalanine (Ser).

This sequence belongs to the PAL/histidase family. Contains an active site 4-methylidene-imidazol-5-one (MIO), which is formed autocatalytically by cyclization and dehydration of residues Ala-Ser-Gly.

It localises to the cytoplasm. The enzyme catalyses L-histidine = trans-urocanate + NH4(+). It participates in amino-acid degradation; L-histidine degradation into L-glutamate; N-formimidoyl-L-glutamate from L-histidine: step 1/3. In Hyphomonas neptunium (strain ATCC 15444), this protein is Histidine ammonia-lyase.